Consider the following 506-residue polypeptide: MSFSVEVLAGIAIELQRGIGHQDRFQRLITTLRQVLACDASALLRYESRQFIPLAIDGLAQDVLGRRFTLEGHPRLEAIARAGDVVRFPADSDLPDPYDGLIPGQESLKVHACVGLPLFAGQNLIGALTLDAMTPEQFEVFSDEELRLVAALAAGALSNALLIEQLESQNMLPGSSGVFEPIKETHMIGLSPAMTQLKKEIEIVAGSDLNVLIGGETGTGKELVAKAIHQGSPRAVNPLVYLNCAALPESVAESELFGHVKGAFTGAISNRSGKFEMADNGTLFLDEIGELSLALQAKLLRVLQYGDIQRVGDDRSLRVDVRVLAATNRDLREEVLAGRFRADLFHRLSVFPLFVPPLRERGDDVVLLAGYFCEQCRLRLGLSRVVLSPDARRHLLNYGWPGNVRELEHAIHRAVVLARATRAGDEVILEAQHFALSEDVLPAPPAESFLALPTCRNLRESTENFQREMIRQALAQNNHNWAASARALETDVANLHRLAKRLGLKD.

D57 bears the 4-aspartylphosphate mark. Positions 187 to 416 (MIGLSPAMTQ…LEHAIHRAVV (230 aa)) constitute a Sigma-54 factor interaction domain. ATP contacts are provided by residues 215 to 222 (GETGTGKE) and 278 to 287 (ADNGTLFLDE). Residues 481-500 (WAASARALETDVANLHRLAK) constitute a DNA-binding region (H-T-H motif).

Its pathway is nitrogen metabolism; nitric oxide reduction. In terms of biological role, required for the expression of anaerobic nitric oxide (NO) reductase, acts as a transcriptional activator for at least the norVW operon. Activation also requires sigma-54. In Salmonella agona (strain SL483), this protein is Anaerobic nitric oxide reductase transcription regulator NorR.